The primary structure comprises 185 residues: Ribosome-recycling factor (185 aa).

Belongs to the RRF family.

The protein resides in the cytoplasm. Its function is as follows. Responsible for the release of ribosomes from messenger RNA at the termination of protein biosynthesis. May increase the efficiency of translation by recycling ribosomes from one round of translation to another. This chain is Ribosome-recycling factor, found in Corynebacterium kroppenstedtii (strain DSM 44385 / JCM 11950 / CIP 105744 / CCUG 35717).